The following is a 408-amino-acid chain: 3-phosphoshikimate 1-carboxyvinyltransferase (408 aa).

Residues Lys-20, Ser-21, and Arg-25 each coordinate 3-phosphoshikimate. Position 20 (Lys-20) interacts with phosphoenolpyruvate. Arg-111 contacts phosphoenolpyruvate. 3-phosphoshikimate is bound by residues Ser-151, Ser-152, Gln-153, Ser-178, Asp-293, and Lys-320. Gln-153 is a binding site for phosphoenolpyruvate. Asp-293 functions as the Proton acceptor in the catalytic mechanism. Arg-324, Arg-365, and Lys-389 together coordinate phosphoenolpyruvate.

It belongs to the EPSP synthase family. As to quaternary structure, monomer.

The protein resides in the cytoplasm. The enzyme catalyses 3-phosphoshikimate + phosphoenolpyruvate = 5-O-(1-carboxyvinyl)-3-phosphoshikimate + phosphate. The protein operates within metabolic intermediate biosynthesis; chorismate biosynthesis. Its function is as follows. Catalyzes the transfer of the enolpyruvyl moiety of phosphoenolpyruvate (PEP) to the 5-hydroxyl of shikimate-3-phosphate (S3P) to produce enolpyruvyl shikimate-3-phosphate and inorganic phosphate. The polypeptide is 3-phosphoshikimate 1-carboxyvinyltransferase (Sulfurisphaera tokodaii (strain DSM 16993 / JCM 10545 / NBRC 100140 / 7) (Sulfolobus tokodaii)).